The primary structure comprises 249 residues: 5'-nucleotidase SurE (249 aa).

Residues D8, D9, S39, and N91 each coordinate a divalent metal cation.

This sequence belongs to the SurE nucleotidase family. A divalent metal cation serves as cofactor.

The protein resides in the cytoplasm. It catalyses the reaction a ribonucleoside 5'-phosphate + H2O = a ribonucleoside + phosphate. Nucleotidase that shows phosphatase activity on nucleoside 5'-monophosphates. The polypeptide is 5'-nucleotidase SurE (Pseudomonas syringae pv. tomato (strain ATCC BAA-871 / DC3000)).